A 1250-amino-acid chain; its full sequence is Ras-associated and pleckstrin homology domains-containing protein 1 (1250 aa).

Met1 bears the N-acetylmethionine mark. Positions 1-23 (MEQLSDEEIDHGAEEDSDKEDQD) are enriched in acidic residues. The tract at residues 1 to 26 (MEQLSDEEIDHGAEEDSDKEDQDLDK) is disordered. 7 positions are modified to phosphoserine: Ser5, Ser17, Ser54, Ser150, Ser192, Ser203, and Ser205. A disordered region spans residues 179-217 (TKPLVTNQHRRTASAGTVSDAEVHSISNSSHSSITSAAS). Low complexity predominate over residues 202-217 (HSISNSSHSSITSAAS). A Ras-associating domain is found at 269 to 355 (KKLVIRVHMS…NKLIFMERIE (87 aa)). The 110-residue stretch at 396 to 505 (VPEIEGVLWL…WVNGIRIAKY (110 aa)) folds into the PH domain. 2 positions are modified to phosphotyrosine; by ABL1: Tyr426 and Tyr456. The segment covering 535 to 551 (KSGSSSSSIPESQSNHS) has biased composition (low complexity). 5 disordered regions span residues 535-570 (KSGS…VRSQ), 588-663 (EESS…AAPM), 675-1036 (NASQ…SGVN), 1050-1162 (APVL…LSVQ), and 1176-1250 (KSIT…SRDW). Polar residues predominate over residues 552–570 (NQSDSGVSDTQPAGHVRSQ). Positions 588-597 (EESSKARMES) are enriched in basic and acidic residues. Ser610 bears the Phosphoserine mark. A compositionally biased stretch (pro residues) spans 624-650 (PSPPLPPPPPPPPPPPPPPPPPPPPLP). Residues 651 to 662 (SQSAPSAGSAAP) are compositionally biased toward low complexity. 2 stretches are compositionally biased toward pro residues: residues 707–721 (GVVP…PPTP) and 760–781 (PPTP…PPKP). The span at 791-802 (TKTVAPVVTQAA) shows a compositional bias: low complexity. Composition is skewed to pro residues over residues 803-814 (PPTPTPPVPPAK) and 823-840 (YIPP…PPTL). At Ser827 the chain carries Phosphoserine. The residue at position 830 (Thr830) is a Phosphothreonine. Residues Ser845, Ser853, and Ser894 each carry the phosphoserine modification. The span at 909 to 947 (IPVPSPDFPPPPPESSLVFPPPPPSPVPAPPPPPPPTAS) shows a compositional bias: pro residues. Residues 948–968 (PTPDKSGSPGKKTSKTSSPGG) show a composition bias toward low complexity. Position 965 is a phosphoserine (Ser965). A Phosphothreonine modification is found at Thr974. Residues 976–986 (QRNSSIKSSSG) show a composition bias toward polar residues. 2 positions are modified to phosphoserine: Ser996 and Ser1012. 2 stretches are compositionally biased toward pro residues: residues 1018 to 1027 (LPPPAAPPKP) and 1065 to 1088 (PSPP…PPIE). Composition is skewed to polar residues over residues 1131 to 1144 (TRLT…QPTM) and 1151 to 1161 (VPTSPKSSLSV). Ser1183 bears the Phosphoserine mark. Phosphotyrosine; by ABL1 is present on Tyr1226. The span at 1238-1250 (PKRDQNTKLSRDW) shows a compositional bias: basic and acidic residues.

It belongs to the MRL family. As to quaternary structure, interacts with EVL and VASP and targets them to the leading edge. Interacts (via Ras associating and PH domains) with RAC1. Isoform RMO1-RAPH1 is ubiquitously expressed with highest levels in brain, heart, ovary and developing embryo. Isoform RMO1 is widely expressed with highest levels in liver. Low expression in B-cells.

It is found in the cell membrane. The protein localises to the cell projection. Its subcellular location is the lamellipodium. It localises to the filopodium. The protein resides in the cytoplasm. It is found in the cytoskeleton. In terms of biological role, mediator of localized membrane signals. Implicated in the regulation of lamellipodial dynamics. Negatively regulates cell adhesion. This chain is Ras-associated and pleckstrin homology domains-containing protein 1 (RAPH1), found in Homo sapiens (Human).